The following is a 391-amino-acid chain: Calcium-binding and spermatid-specific protein 1 (391 aa).

3 disordered regions span residues 1–23, 90–110, and 152–221; these read MAED…TPTE, PEKE…GSIT, and KEVV…KEVT. Over residues 90–101 the composition is skewed to low complexity; it reads PEKEITTPTETP. S253 and S269 each carry phosphoserine. The interval 271–299 is disordered; sequence EKAKDNVEDPLNDEESTDGANDWMEKETA. Acidic residues predominate over residues 278–287; that stretch reads EDPLNDEEST. Phosphoserine occurs at positions 314, 347, 357, 372, and 376. The interval 330 to 351 is disordered; sequence EESHVNTTDLPENETTESVTNV.

Detected only in testis. Expressed from stages X to VIII of the seminiferous epithelial cycle. Expressed from step 13 to step 16 of spermatid development (at protein level).

The protein localises to the cytoplasm. It localises to the mitochondrion inner membrane. It is found in the cell projection. Its subcellular location is the cilium. The protein resides in the flagellum. The protein localises to the cytoplasmic vesicle. It localises to the secretory vesicle. It is found in the acrosome. Functionally, calcium-binding protein. Essential for maintaining the structural integrity of the sperm flagella. The sequence is that of Calcium-binding and spermatid-specific protein 1 (Cabs1) from Mus musculus (Mouse).